We begin with the raw amino-acid sequence, 254 residues long: Ribosomal RNA small subunit methyltransferase J (254 aa).

S-adenosyl-L-methionine is bound by residues 101–102 (RD), 117–118 (ER), 153–154 (SS), and Asp-171.

The protein belongs to the methyltransferase superfamily. RsmJ family.

Its subcellular location is the cytoplasm. The enzyme catalyses guanosine(1516) in 16S rRNA + S-adenosyl-L-methionine = N(2)-methylguanosine(1516) in 16S rRNA + S-adenosyl-L-homocysteine + H(+). Specifically methylates the guanosine in position 1516 of 16S rRNA. This is Ribosomal RNA small subunit methyltransferase J from Enterobacter sp. (strain 638).